A 158-amino-acid chain; its full sequence is 2-C-methyl-D-erythritol 2,4-cyclodiphosphate synthase (158 aa).

Residues Asp9 and His11 each coordinate a divalent metal cation. 4-CDP-2-C-methyl-D-erythritol 2-phosphate contacts are provided by residues 9–11 (DVH) and 35–36 (HS). His43 provides a ligand contact to a divalent metal cation. Residues 57-59 (DIG), 62-66 (FPDTD), 133-136 (TTTE), Phe140, and Arg143 each bind 4-CDP-2-C-methyl-D-erythritol 2-phosphate.

The protein belongs to the IspF family. Homotrimer. A divalent metal cation is required as a cofactor.

The catalysed reaction is 4-CDP-2-C-methyl-D-erythritol 2-phosphate = 2-C-methyl-D-erythritol 2,4-cyclic diphosphate + CMP. Its pathway is isoprenoid biosynthesis; isopentenyl diphosphate biosynthesis via DXP pathway; isopentenyl diphosphate from 1-deoxy-D-xylulose 5-phosphate: step 4/6. Its function is as follows. Involved in the biosynthesis of isopentenyl diphosphate (IPP) and dimethylallyl diphosphate (DMAPP), two major building blocks of isoprenoid compounds. Catalyzes the conversion of 4-diphosphocytidyl-2-C-methyl-D-erythritol 2-phosphate (CDP-ME2P) to 2-C-methyl-D-erythritol 2,4-cyclodiphosphate (ME-CPP) with a corresponding release of cytidine 5-monophosphate (CMP). In Actinobacillus pleuropneumoniae serotype 5b (strain L20), this protein is 2-C-methyl-D-erythritol 2,4-cyclodiphosphate synthase.